We begin with the raw amino-acid sequence, 383 residues long: Histidinol-phosphate aminotransferase (383 aa).

N6-(pyridoxal phosphate)lysine is present on K240.

Belongs to the class-II pyridoxal-phosphate-dependent aminotransferase family. Histidinol-phosphate aminotransferase subfamily. Homodimer. The cofactor is pyridoxal 5'-phosphate.

It catalyses the reaction L-histidinol phosphate + 2-oxoglutarate = 3-(imidazol-4-yl)-2-oxopropyl phosphate + L-glutamate. It participates in amino-acid biosynthesis; L-histidine biosynthesis; L-histidine from 5-phospho-alpha-D-ribose 1-diphosphate: step 7/9. The chain is Histidinol-phosphate aminotransferase from Oleidesulfovibrio alaskensis (strain ATCC BAA-1058 / DSM 17464 / G20) (Desulfovibrio alaskensis).